The sequence spans 691 residues: Elongation factor G (691 aa).

In terms of domain architecture, tr-type G spans 8–283 (EDYRNFGIMA…AVVDFLPSPI (276 aa)). Residues 17-24 (AHIDAGKT), 81-85 (DTPGH), and 135-138 (NKMD) contribute to the GTP site.

It belongs to the TRAFAC class translation factor GTPase superfamily. Classic translation factor GTPase family. EF-G/EF-2 subfamily.

The protein localises to the cytoplasm. Functionally, catalyzes the GTP-dependent ribosomal translocation step during translation elongation. During this step, the ribosome changes from the pre-translocational (PRE) to the post-translocational (POST) state as the newly formed A-site-bound peptidyl-tRNA and P-site-bound deacylated tRNA move to the P and E sites, respectively. Catalyzes the coordinated movement of the two tRNA molecules, the mRNA and conformational changes in the ribosome. The sequence is that of Elongation factor G from Xanthobacter autotrophicus (strain ATCC BAA-1158 / Py2).